Consider the following 208-residue polypeptide: Glutathione S-transferase GstB (208 aa).

A GST N-terminal domain is found at 1-83 (MITLWGRNNS…YLAAQYGQKR (83 aa)). Residues Asn12, Asn39, Val53, and 67–68 (ES) each bind glutathione. A GST C-terminal domain is found at 88 to 208 (SPARRAEAEK…VRKVVMIPVS (121 aa)).

The protein belongs to the GST superfamily.

The catalysed reaction is RX + glutathione = an S-substituted glutathione + a halide anion + H(+). Conjugation of reduced glutathione to a wide number of exogenous and endogenous hydrophobic electrophiles. This chain is Glutathione S-transferase GstB (gstB), found in Escherichia coli O6:H1 (strain CFT073 / ATCC 700928 / UPEC).